Reading from the N-terminus, the 621-residue chain is Pentatricopeptide repeat-containing protein At1g12620 (621 aa).

PPR repeat units lie at residues 36–70, 71–105, 106–140, 141–175, 176–210, 211–245, 246–280, 281–315, 316–350, 351–385, 386–420, 421–455, 456–490, 491–525, 526–560, and 561–595; these read GKVS…RPRP, RLID…GIAH, NLYT…GYEP, DTVT…GHKP, TLIT…GFQP, NEVT…KIKL, DAVK…GFKA, DIII…KITP, DVVA…GISP, DTVT…GCGP, NIRT…GVVA, DTVT…RVRP, DIVS…KMEL, DIGI…GVKP, DVKT…GHSP, and NGCT…GFSV.

It belongs to the PPR family. P subfamily.

The sequence is that of Pentatricopeptide repeat-containing protein At1g12620 from Arabidopsis thaliana (Mouse-ear cress).